Here is a 248-residue protein sequence, read N- to C-terminus: Ubiquinone/menaquinone biosynthesis C-methyltransferase UbiE (248 aa).

Residues S68, D92, and 120-121 each bind S-adenosyl-L-methionine; that span reads NA.

It belongs to the class I-like SAM-binding methyltransferase superfamily. MenG/UbiE family.

It catalyses the reaction a 2-demethylmenaquinol + S-adenosyl-L-methionine = a menaquinol + S-adenosyl-L-homocysteine + H(+). It carries out the reaction a 2-methoxy-6-(all-trans-polyprenyl)benzene-1,4-diol + S-adenosyl-L-methionine = a 5-methoxy-2-methyl-3-(all-trans-polyprenyl)benzene-1,4-diol + S-adenosyl-L-homocysteine + H(+). The protein operates within quinol/quinone metabolism; menaquinone biosynthesis; menaquinol from 1,4-dihydroxy-2-naphthoate: step 2/2. It functions in the pathway cofactor biosynthesis; ubiquinone biosynthesis. Its function is as follows. Methyltransferase required for the conversion of demethylmenaquinol (DMKH2) to menaquinol (MKH2) and the conversion of 2-polyprenyl-6-methoxy-1,4-benzoquinol (DDMQH2) to 2-polyprenyl-3-methyl-6-methoxy-1,4-benzoquinol (DMQH2). In Rickettsia typhi (strain ATCC VR-144 / Wilmington), this protein is Ubiquinone/menaquinone biosynthesis C-methyltransferase UbiE.